The primary structure comprises 311 residues: Oligopeptide transport system permease protein OppC (311 aa).

The Cytoplasmic segment spans residues 1–48 (MTDYRTQPINQKNADFVEQVADRIEEMQLEGRSLWQDAKRRFFRNKAA). A helical membrane pass occupies residues 49–69 (VASLIILAFIIIFITVAPWFF). The Periplasmic segment spans residues 70–113 (PFTYEDTDWNMMSAAPTMEGYHFFGTDASGRDLLVRTAIGGRIS). One can recognise an ABC transmembrane type-1 domain in the interval 110–299 (GRISLLVGIA…LTLFCFNFIG (190 aa)). Residues 114–134 (LLVGIAGAFISVTIGTIYGAI) form a helical membrane-spanning segment. Over 135–146 (SGYVGGKTDMLM) the chain is Cytoplasmic. A helical transmembrane segment spans residues 147–169 (MRFLEILSSFPFMFFVILLVTLF). The Periplasmic portion of the chain corresponds to 170–172 (GQN). A helical membrane pass occupies residues 173–192 (IFLIFIAIGAIAWLGLARIV). At 193–222 (RGQTLSLKNKEFVEAAIVCGVPRRQIILKH) the chain is on the cytoplasmic side. Residues 223–243 (IIPNVLGLVAVYASLEVPGLI) form a helical membrane-spanning segment. Over 244–278 (LFESFLSFLGLGTQEPMSSWGALLSDGAAQMEVSP) the chain is Periplasmic. A helical membrane pass occupies residues 279–299 (WLLIFPAFFLCLTLFCFNFIG). The Cytoplasmic portion of the chain corresponds to 300–311 (DGLRDALDPKDR).

Belongs to the binding-protein-dependent transport system permease family. OppBC subfamily. In terms of assembly, the complex is composed of two ATP-binding proteins (OppD and OppF), two transmembrane proteins (OppB and OppC) and a solute-binding protein (OppA).

The protein localises to the cell inner membrane. In terms of biological role, part of the ABC transporter complex OppABCDF involved in the uptake of oligopeptides. Probably responsible for the translocation of the substrate across the membrane. The sequence is that of Oligopeptide transport system permease protein OppC (oppC) from Haemophilus influenzae (strain ATCC 51907 / DSM 11121 / KW20 / Rd).